Consider the following 238-residue polypeptide: Uridylate kinase (238 aa).

12 to 15 contacts ATP; the sequence is KLSG. Glycine 54 lines the UMP pocket. 2 residues coordinate ATP: glycine 55 and arginine 59. UMP is bound by residues aspartate 74 and 135–142; that span reads TGNPFFTT. ATP is bound by residues threonine 162, tyrosine 168, and aspartate 171.

This sequence belongs to the UMP kinase family. Homohexamer.

Its subcellular location is the cytoplasm. It carries out the reaction UMP + ATP = UDP + ADP. The protein operates within pyrimidine metabolism; CTP biosynthesis via de novo pathway; UDP from UMP (UMPK route): step 1/1. With respect to regulation, inhibited by UTP. Its function is as follows. Catalyzes the reversible phosphorylation of UMP to UDP. The sequence is that of Uridylate kinase from Janthinobacterium sp. (strain Marseille) (Minibacterium massiliensis).